We begin with the raw amino-acid sequence, 876 residues long: Alanine--tRNA ligase (876 aa).

Zn(2+) is bound by residues histidine 562, histidine 566, cysteine 666, and histidine 670.

Belongs to the class-II aminoacyl-tRNA synthetase family. It depends on Zn(2+) as a cofactor.

The protein localises to the cytoplasm. The catalysed reaction is tRNA(Ala) + L-alanine + ATP = L-alanyl-tRNA(Ala) + AMP + diphosphate. Functionally, catalyzes the attachment of alanine to tRNA(Ala) in a two-step reaction: alanine is first activated by ATP to form Ala-AMP and then transferred to the acceptor end of tRNA(Ala). Also edits incorrectly charged Ser-tRNA(Ala) and Gly-tRNA(Ala) via its editing domain. In Hahella chejuensis (strain KCTC 2396), this protein is Alanine--tRNA ligase.